A 660-amino-acid chain; its full sequence is Pescadillo homolog (660 aa).

Disordered regions lie at residues 313 to 358 (VESD…SYSS) and 471 to 660 (PELY…EKKA). Basic and acidic residues predominate over residues 331–342 (EEKPSDAIDKFE). The 117-residue stretch at 360-476 (DPAQLFSRLT…ELKSPELYGP (117 aa)) folds into the BRCT domain. Residues 501-659 (LEEQQSEGEA…KRRRLEKEKK (159 aa)) adopt a coiled-coil conformation. The span at 504-566 (QQSEGEAIDA…EEGSEDEEES (63 aa)) shows a compositional bias: acidic residues. Positions 584–619 (VKGDKKMDAKTKAKLEAKKALERKKKSEAEDLERAK) are enriched in basic and acidic residues.

It belongs to the pescadillo family. In terms of assembly, component of the NOP7 complex, composed of ERB1, NOP7 and YTM1. The complex is held together by ERB1, which interacts with NOP7 via its N-terminal domain and with YTM1 via a high-affinity interaction between the seven-bladed beta-propeller domains of the 2 proteins. The NOP7 complex associates with the 66S pre-ribosome.

The protein resides in the nucleus. It is found in the nucleolus. It localises to the nucleoplasm. Its function is as follows. Component of the NOP7 complex, which is required for maturation of the 25S and 5.8S ribosomal RNAs and formation of the 60S ribosome. This Chaetomium globosum (strain ATCC 6205 / CBS 148.51 / DSM 1962 / NBRC 6347 / NRRL 1970) (Soil fungus) protein is Pescadillo homolog.